Reading from the N-terminus, the 317-residue chain is MENENLKVEQATTAENNMAEKADDSKASKEVKPTIVSREKLLEAGTYFGHKKSMWNPKMKEFLYPQSKRGMHMINTNVTLQRLEFAYNILNKFVAKNPRTTFIFVGTKKQAKDTIKDNALRTGSFYVSERWLGGTLTNASTIFKRVKVMEELEAQAAKKFQGYTKKEGLIKQKELDKLHKNLDGIRKMQSLPSFMIVADPNVDAIAVKEARSKGVKVIGILDSNSNPDAVDFGIPANDDSAKSITLIMTILADAIATARGGKAKFAYQGDDKVILPEFKTDKTLNPRFMNQRRSFEQNSAEGVKTVEKTTTSTEVAE.

Disordered regions lie at residues 1-30 (MENE…ASKE) and 293-317 (RSFE…EVAE). A compositionally biased stretch (basic and acidic residues) spans 18-30 (MAEKADDSKASKE). Residues 308–317 (KTTTSTEVAE) are compositionally biased toward low complexity.

Belongs to the universal ribosomal protein uS2 family.

The protein is Small ribosomal subunit protein uS2 of Mycoplasmopsis agalactiae (strain NCTC 10123 / CIP 59.7 / PG2) (Mycoplasma agalactiae).